The sequence spans 450 residues: MAEPTSTLSTATPAAPRISFVSLGCPKALVDSERIVTRLRAEGYELTRNHDGADLVIVNTCGFLDSAKAESLSAIGEALAENGKVVVTGCMGAEPEQIRAVHPSVLAITGPQQYESVLDAVHQAVPPKHDPFLDLVPEQGVKLTPRHYAYLKISEGCNNRCTFCIIPKLRGDLVSRPLNEVMREAEKLVAAGVKELLVISQDTSAYGVDLKYAESRWKDRDWATRFFDLADALGDLGAWVRLHYVYPYPHVDRVMELMASGKVLPYLDIPFQHASPTVLRRMKRPAAQEKTLARVLAWRDAVPDITLRSTFIVGFPGETEEEFQELLDFLDEAQLDRVGCFKFEPVAGAPANALENPVPDEVKAERYDRFMLKQQAISARRLKRKVGTRQQVIIDSVTPGGAIGRTKGDAPEIDGSVKIASRRPLRVGEIATVKIEAADAYDLIGSAVGF.

Residues 16–126 enclose the MTTase N-terminal domain; the sequence is PRISFVSLGC…VLDAVHQAVP (111 aa). 6 residues coordinate [4Fe-4S] cluster: Cys25, Cys61, Cys90, Cys157, Cys161, and Cys164. The region spanning 143 to 380 is the Radical SAM core domain; the sequence is LTPRHYAYLK…MLKQQAISAR (238 aa). The region spanning 383-449 is the TRAM domain; the sequence is KRKVGTRQQV…AYDLIGSAVG (67 aa).

Belongs to the methylthiotransferase family. RimO subfamily. [4Fe-4S] cluster serves as cofactor.

It localises to the cytoplasm. It carries out the reaction L-aspartate(89)-[ribosomal protein uS12]-hydrogen + (sulfur carrier)-SH + AH2 + 2 S-adenosyl-L-methionine = 3-methylsulfanyl-L-aspartate(89)-[ribosomal protein uS12]-hydrogen + (sulfur carrier)-H + 5'-deoxyadenosine + L-methionine + A + S-adenosyl-L-homocysteine + 2 H(+). In terms of biological role, catalyzes the methylthiolation of an aspartic acid residue of ribosomal protein uS12. The chain is Ribosomal protein uS12 methylthiotransferase RimO from Azorhizobium caulinodans (strain ATCC 43989 / DSM 5975 / JCM 20966 / LMG 6465 / NBRC 14845 / NCIMB 13405 / ORS 571).